A 176-amino-acid chain; its full sequence is Pituitary adenylate cyclase-activating polypeptide (176 aa).

An N-terminal signal peptide occupies residues 1 to 24 (MTMCSGARLALLVYGILMHSSVYG). A propeptide spanning residues 25–80 (SPAASGLRFPGIRPENEAYDEDGNPQQDFYDSEPPGVGSPASALRDAYALYYPAEE) is cleaved from the precursor. Disordered regions lie at residues 36–62 (IRPE…PGVG) and 115–134 (GTPG…RHSD). The tract at residues 150-158 (VKKYLAAVL) is important for receptor binding. Residue L158 is modified to Leucine amide. A Lysine amide modification is found at K169. A propeptide spanning residues 173–176 (IPYL) is cleaved from the precursor.

Belongs to the glucagon family.

The protein localises to the secreted. Its function is as follows. PACAP is a neuropeptide involved in diverse array of physiological processes through activating the PACAP subfamily of class B1 G protein-coupled receptors: VIP receptor 1 (VIPR1), VIP receptor 2 (VIPR2), and PACAP type I receptor (ADCYAP1R1). Exerts neuroprotective and general cytoprotective effects due to anti-apoptotic, anti-inflammatory, and antioxidant actions. Promotes neuron projection development through the RAPGEF2/Rap1/B-Raf/ERK pathway. In chromaffin cells, induces long-lasting increase of intracellular calcium concentrations and neuroendocrine secretion. Involved in the control of glucose homeostasis, induces insulin secretion by pancreatic beta cells. PACAP exists in two bioactive forms from proteolysis of the same precursor protein, PACAP27 and PACAP38, which differ by eleven amino acid residues in the C-terminus. The polypeptide is Pituitary adenylate cyclase-activating polypeptide (ADCYAP1) (Ovis aries (Sheep)).